Here is a 115-residue protein sequence, read N- to C-terminus: Na(+)/H(+) antiporter subunit C1 (115 aa).

The next 3 membrane-spanning stretches (helical) occupy residues 1 to 21, 28 to 48, and 72 to 92; these read MEII…YLVL, IIMG…TMGG, and LILT…VLAF.

This sequence belongs to the CPA3 antiporters (TC 2.A.63) subunit C family. As to quaternary structure, may form a heterooligomeric complex that consists of seven subunits: mnhA1, mnhB1, mnhC1, mnhD1, mnhE1, mnhF1 and mnhG1.

Its subcellular location is the cell membrane. In terms of biological role, mnh complex is a Na(+)/H(+) antiporter involved in Na(+) excretion. In Staphylococcus epidermidis (strain ATCC 35984 / DSM 28319 / BCRC 17069 / CCUG 31568 / BM 3577 / RP62A), this protein is Na(+)/H(+) antiporter subunit C1 (mnhC1).